The following is a 160-amino-acid chain: Transcription elongation factor GreA (160 aa).

It belongs to the GreA/GreB family.

Necessary for efficient RNA polymerase transcription elongation past template-encoded arresting sites. The arresting sites in DNA have the property of trapping a certain fraction of elongating RNA polymerases that pass through, resulting in locked ternary complexes. Cleavage of the nascent transcript by cleavage factors such as GreA or GreB allows the resumption of elongation from the new 3'terminus. GreA releases sequences of 2 to 3 nucleotides. This is Transcription elongation factor GreA from Leuconostoc citreum (strain KM20).